Here is a 376-residue protein sequence, read N- to C-terminus: Erythronate-4-phosphate dehydrogenase (376 aa).

Residues Ser45 and Thr67 each contribute to the substrate site. Asp147 serves as a coordination point for NAD(+). Arg209 is a catalytic residue. Asp233 contributes to the NAD(+) binding site. Glu238 is an active-site residue. His255 serves as the catalytic Proton donor. Gly258 contacts NAD(+). Tyr259 contacts substrate.

This sequence belongs to the D-isomer specific 2-hydroxyacid dehydrogenase family. PdxB subfamily. As to quaternary structure, homodimer.

Its subcellular location is the cytoplasm. It carries out the reaction 4-phospho-D-erythronate + NAD(+) = (R)-3-hydroxy-2-oxo-4-phosphooxybutanoate + NADH + H(+). It participates in cofactor biosynthesis; pyridoxine 5'-phosphate biosynthesis; pyridoxine 5'-phosphate from D-erythrose 4-phosphate: step 2/5. Its function is as follows. Catalyzes the oxidation of erythronate-4-phosphate to 3-hydroxy-2-oxo-4-phosphonooxybutanoate. This Shewanella sp. (strain MR-7) protein is Erythronate-4-phosphate dehydrogenase.